The primary structure comprises 501 residues: uncharacterized protein (501 aa).

The chain crosses the membrane as a helical span at residues 26–46; it reads ILLLLLGLIVLVNIGINVATM. Disordered stretches follow at residues 316-384 and 409-501; these read RGTE…VRRR and EASH…EKLN. Residues 476 to 490 are compositionally biased toward low complexity; sequence RSSSLPPASTSTLRP.

The protein localises to the membrane. This is an uncharacterized protein from Homo sapiens (Human).